Reading from the N-terminus, the 488-residue chain is MQYRDLRDFIRGLEQRGELKRIQVPISPVLEMTEVCDRTLRAKGPALLFEKPTGFDIPVLGNLFGTPERVAMGMGAESVEELREIGKLLAFLKEPEPPKGLKDAWSKLPIFKKVVSMAPKVVKDAVCQEVVVEGDDVDLGQLPIQHCWPGDVAPLITWGLTVTRGPNKDRQNLGIYRQQVIGRNKVIMRWLSHRGGALDYREWCEKNPGQPFPVAVALGADPATILGAVTPVPDTLSEYAFAGLLRGNRTELVKCRGSNLQVPATAEIILEGVIHPGEMAPEGPYGDHTGYYNEVDSFPVFTVERITHRQKPIYHSTYTGRPPDEPAILGVALNEVFVPILQKQFPEIVDFYLPPEGCSYRMAVVTMKKQYPGHAKRVMLGVWSFLRQFMYTKFVIVTDDDINARDWNDVIWAITTRMDPKRDTVMIDNTPIDYLDFASPVSGLGSKMGLDATHKWPGETTREWGRVIVKDEAVTRRIDELWDQLGID.

N172 provides a ligand contact to Mn(2+). Prenylated FMN contacts are provided by residues I175–R177, R189–L191, and R194–G195. Residue E238 coordinates Mn(2+). The active-site Proton donor is the D287.

This sequence belongs to the UbiD family. As to quaternary structure, homohexamer. It depends on prenylated FMN as a cofactor. The cofactor is Mn(2+).

The protein localises to the cell membrane. The enzyme catalyses a 4-hydroxy-3-(all-trans-polyprenyl)benzoate + H(+) = a 2-(all-trans-polyprenyl)phenol + CO2. The protein operates within cofactor biosynthesis; ubiquinone biosynthesis. Functionally, catalyzes the decarboxylation of 3-octaprenyl-4-hydroxy benzoate to 2-octaprenylphenol, an intermediate step in ubiquinone biosynthesis. The chain is 3-octaprenyl-4-hydroxybenzoate carboxy-lyase from Pseudomonas putida (strain W619).